We begin with the raw amino-acid sequence, 336 residues long: Dihydroorotate dehydrogenase (quinone) (336 aa).

FMN-binding positions include 62-66 (AGLDK) and Thr-86. Lys-66 contacts substrate. Residue 111–115 (NRMGF) participates in substrate binding. FMN-binding residues include Asn-139 and Asn-172. Asn-172 lines the substrate pocket. Ser-175 functions as the Nucleophile in the catalytic mechanism. Asn-177 is a binding site for substrate. 2 residues coordinate FMN: Lys-217 and Thr-245. 246–247 (NT) lines the substrate pocket. FMN-binding positions include Gly-268, Gly-297, and 318 to 319 (YS).

It belongs to the dihydroorotate dehydrogenase family. Type 2 subfamily. As to quaternary structure, monomer. FMN is required as a cofactor.

Its subcellular location is the cell membrane. It catalyses the reaction (S)-dihydroorotate + a quinone = orotate + a quinol. The protein operates within pyrimidine metabolism; UMP biosynthesis via de novo pathway; orotate from (S)-dihydroorotate (quinone route): step 1/1. Catalyzes the conversion of dihydroorotate to orotate with quinone as electron acceptor. This is Dihydroorotate dehydrogenase (quinone) from Sodalis glossinidius (strain morsitans).